Here is a 295-residue protein sequence, read N- to C-terminus: Alpha-ketoglutarate-dependent sulfate ester dioxygenase (295 aa).

Residue histidine 71 coordinates substrate. Fe cation is bound by residues histidine 98 and aspartate 100. Residue valine 101 coordinates substrate. Residue threonine 125 coordinates 2-oxoglutarate. Residue histidine 252 participates in Fe cation binding. 2-oxoglutarate-binding residues include arginine 263 and arginine 267.

Belongs to the TfdA dioxygenase family. It depends on Fe(2+) as a cofactor.

The catalysed reaction is a primary linear alkyl sulfate ester + 2-oxoglutarate + O2 = an aldehyde + sulfate + succinate + CO2 + H(+). The enzyme catalyses 2-ethylhexyl sulfate + 2-oxoglutarate + O2 = 2-ethylhexanal + sulfate + succinate + CO2 + H(+). It catalyses the reaction hexyl sulfate + 2-oxoglutarate + O2 = hexanal + sulfate + succinate + CO2 + H(+). It carries out the reaction pentyl sulfate + 2-oxoglutarate + O2 = pentanal + sulfate + succinate + CO2 + H(+). The catalysed reaction is heptyl sulfate + 2-oxoglutarate + O2 = heptanal + sulfate + succinate + CO2 + H(+). In terms of biological role, alpha-ketoglutarate-dependent sulfate ester dioxygenase, which oxidizes medium-chain alkyl-sulfate esters. Shows preference for 2-ethylhexyl sulfate (2-EHS) in vitro, leading to the formation of succinate and 2-ethylhexanal. Has likely a role in sulfate scavenging in vivo. Also causes the inactivation of the 2-carboxyquinoxaline Ty38c (an antitubercular compound that inhibits DprE1) via oxidative decarboxylation, using Ty38c instead of alpha-ketoglutarate as a substrate. Is thus responsible for primary resistance of M.tuberculosis to Ty38c in vitro. Overexpression of Rv3406 causes resistance to Ty38c. The protein is Alpha-ketoglutarate-dependent sulfate ester dioxygenase of Mycobacterium tuberculosis (strain ATCC 25618 / H37Rv).